Reading from the N-terminus, the 305-residue chain is Large ribosomal subunit protein uL10 (305 aa).

This sequence belongs to the universal ribosomal protein uL10 family. As to quaternary structure, P0 forms a pentameric complex by interaction with dimers of P1 and P2. Post-translationally, phosphorylated.

Ribosomal protein P0 is the functional equivalent of E.coli protein L10. This is Large ribosomal subunit protein uL10 (rplp0) from Dictyostelium discoideum (Social amoeba).